A 74-amino-acid chain; its full sequence is DNA-directed RNA polymerase subunit omega (74 aa).

This sequence belongs to the RNA polymerase subunit omega family. The RNAP catalytic core consists of 2 alpha, 1 beta, 1 beta' and 1 omega subunit. When a sigma factor is associated with the core the holoenzyme is formed, which can initiate transcription.

It catalyses the reaction RNA(n) + a ribonucleoside 5'-triphosphate = RNA(n+1) + diphosphate. Functionally, promotes RNA polymerase assembly. Latches the N- and C-terminal regions of the beta' subunit thereby facilitating its interaction with the beta and alpha subunits. The polypeptide is DNA-directed RNA polymerase subunit omega (Helicobacter pylori (strain P12)).